Consider the following 258-residue polypeptide: Acyl-[acyl-carrier-protein]--UDP-N-acetylglucosamine O-acyltransferase (258 aa).

The protein belongs to the transferase hexapeptide repeat family. LpxA subfamily. Homotrimer.

The protein localises to the cytoplasm. It catalyses the reaction a (3R)-hydroxyacyl-[ACP] + UDP-N-acetyl-alpha-D-glucosamine = a UDP-3-O-[(3R)-3-hydroxyacyl]-N-acetyl-alpha-D-glucosamine + holo-[ACP]. It functions in the pathway glycolipid biosynthesis; lipid IV(A) biosynthesis; lipid IV(A) from (3R)-3-hydroxytetradecanoyl-[acyl-carrier-protein] and UDP-N-acetyl-alpha-D-glucosamine: step 1/6. Functionally, involved in the biosynthesis of lipid A, a phosphorylated glycolipid that anchors the lipopolysaccharide to the outer membrane of the cell. In Neisseria gonorrhoeae (strain ATCC 700825 / FA 1090), this protein is Acyl-[acyl-carrier-protein]--UDP-N-acetylglucosamine O-acyltransferase.